A 176-amino-acid polypeptide reads, in one-letter code: Endoribonuclease YbeY (176 aa).

Zn(2+)-binding residues include His117, His121, and His127.

This sequence belongs to the endoribonuclease YbeY family. Zn(2+) serves as cofactor.

It is found in the cytoplasm. Its function is as follows. Single strand-specific metallo-endoribonuclease involved in late-stage 70S ribosome quality control and in maturation of the 3' terminus of the 16S rRNA. This Methylocella silvestris (strain DSM 15510 / CIP 108128 / LMG 27833 / NCIMB 13906 / BL2) protein is Endoribonuclease YbeY.